The primary structure comprises 748 residues: QGAGAAAAAAGGAGQGGYGGLGGQGAGQGGYGGLGGQGAGQGAGAAAAAAAGGAGQGGYGGLGSQGAGRGGQGAGAAAAAAGGAGQGGYGGLGSQGAGRGGLGGQGAGAAAAAAAGGAGQGGYGGLGNQGAGRGGQGAAAAAAGGAGQGGYGGLGSQGAGRGGLGGQGAGAAAAAAGGAGQGGYGGLGGQGAGQGGYGGLGSQGAGRGGLGGQGAGAAAAAAAGGAGQGGLGGQGAGQGAGASAAAAGGAGQGGYGGLGSQGAGRGGEGAGAAAAAAGGAGQGGYGGLGGQGAGQGGYGGLGSQGAGRGGLGGQGAGAAAAGGAGQGGLGGQGAGQGAGAAAAAAGGAGQGGYGGLGSQGAGRGGLGGQGAGAVAAAAAGGAGQGGYGGLGSQGAGRGGQGAGAAAAAAGGAGQRGYGGLGNQGAGRGGLGGQGAGAAAAAAAGGAGQGGYGGLGNQGAGRGGQGAAAAAGGAGQGGYGGLGSQGAGRGGQGAGAAAAAAVGAGQEGIRGQGAGQGGYGGLGSQGSGRGGLGGQGAGAAAAAAGGAGQGGLGGQGAGQGAGAAAAAAGGVRQGGYGGLGSQGAGRGGQGAGAAAAAAGGAGQGGYGGLGGQGVGRGGLGGQGAGAAAAGGAGQGGYGGVGSGASAASAAASRLSSPQASSRVSSAVSNLVASGPTNSAALSSTISNVVSQIGASNPGLSGCDVLIQALLEVVSALIQILGSSSIGQVNYGSAGQATQIVGQSVYQALG.

Repeat copies occupy residues 1 to 25 (QGAG…GGQG), 26 to 38 (AGQG…GGQG), 39 to 66 (AGQG…GSQG), 67 to 96 (AGRG…GSQG), 97 to 130 (AGRG…GNQG), 131 to 158 (AGRG…GSQG), 159 to 191 (AGRG…GGQG), 192 to 204 (AGQG…GSQG), 205 to 235 (AGRG…GGQG), 236 to 262 (AGQG…GSQG), 263 to 292 (AGRG…GGQG), 293 to 305 (AGQG…GSQG), 306 to 333 (AGRG…GGQG), 334 to 360 (AGQG…GSQG), 361 to 394 (AGRG…GSQG), 395 to 424 (AGRG…GNQG), 425 to 458 (AGRG…GNQG), 459 to 485 (AGRG…GSQG), 486 to 512 (AGRG…RGQG), 513 to 525 (AGQG…GSQG), 526 to 555 (SGRG…GGQG), 556 to 582 (AGQG…GSQG), 583 to 612 (AGRG…GGQG), 613 to 642 (VGRG…VGSG), and 643 to 655 (ASAA…RLSS). The interval 1 to 655 (QGAGAAAAAA…ASAAASRLSS (655 aa)) is 25 X approximate tandem repeats.

It belongs to the silk fibroin family. In terms of assembly, major subunit, with spidroin 2, of the dragline silk.

The protein localises to the secreted. It is found in the extracellular space. Its function is as follows. Spiders' major ampullate silk possesses unique characteristics of strength and elasticity. Fibroin consists of pseudocrystalline regions of antiparallel beta-sheet interspersed with elastic amorphous segments. This is Spidroin-1 from Trichonephila clavipes (Golden silk orbweaver).